Here is a 208-residue protein sequence, read N- to C-terminus: MQRWSGVLLISLCCLLRGALAYTEPIYEIVEEDIPAEDIEVTRTNEKQDGRVFSKRDFDGAMPGVLRFGKRGGVWEKRESSVQKKEMPGVLRFGKRAYFDEKKSVPGVLRFGKRSYFDEKKSVPGVLRFGKRDVPMDKREIPGVLRFGKRDYMADSFDKRSEVPGVLRFGKRDVPGVLRFGKRSDLEEHYAGVLLKKSVPGVLRFGRK.

The N-terminal stretch at 1–21 (MQRWSGVLLISLCCLLRGALA) is a signal peptide. A propeptide spanning residues 22-83 (YTEPIYEIVE…VWEKRESSVQ (62 aa)) is cleaved from the precursor. Position 93 is a phenylalanine amide (Phe93). A propeptide spanning residues 97 to 101 (AYFDE) is cleaved from the precursor. Phenylalanine amide is present on Phe111. A propeptide spanning residues 115–119 (SYFDE) is cleaved from the precursor. At Phe129 the chain carries Phenylalanine amide. The propeptide occupies 133-137 (DVPMD). Position 147 is a phenylalanine amide (Phe147). A propeptide spanning residues 151–158 (DYMADSFD) is cleaved from the precursor. Phe169 and Phe180 each carry phenylalanine amide. Positions 184–195 (SDLEEHYAGVLL) are excised as a propeptide. Position 205 is a phenylalanine amide (Phe205).

This sequence belongs to the FARP (FMRFamide related peptide) family. May be processed by convertase egl-3. In terms of tissue distribution, expressed in head neurons and weakly in ventral nerve cord. Expressed in the interneurons AVA, AIY and RIG, the motor neuron RIM and the pharyngeal neurons M2 and M3. EMPGVLRF-amide: Expressed in cholinergic pharyngeal motoneurons M2 and M3.

It is found in the secreted. Its function is as follows. FMRFamide-like neuropeptides. Ligand to G-protein coupled receptor npr-1. Involved in modulating locomotion quiescence during the sleep-like state called lethargus which occurs during molting between larval and adult stages, acting via npr-1. Together with flp-1, plays a homeostatic role by acting on the GABAergic neural transmission at neuromuscular junctions to prevent overexcitation of the locomotor circuit. Plays a role in the navigational capacity of sperm and the targeting of sperm derived from males to the fertilization site in the uterus of hermaphrodites. In terms of biological role, SVPGVLRF-amide: Excites muscle tension. Functionally, activates the G-protein coupled receptor npr-1 more effectively than other flp-18 peptides. Inhibits the activity of dissected pharyngeal myogenic muscle system. The sequence is that of FMRFamide-like neuropeptide 18 from Caenorhabditis elegans.